Reading from the N-terminus, the 183-residue chain is Proton-transporting V-type ATPase complex assembly regulator TMEM9 (183 aa).

An N-terminal signal peptide occupies residues 1 to 20 (MKLLSLVAVVGCLLVPPAEA). Residues asparagine 21, asparagine 38, and asparagine 47 are each glycosylated (N-linked (GlcNAc...) asparagine). At 21 to 89 (NKSSEDIRCK…YEERSTTTIK (69 aa)) the chain is on the extracellular side. The helical transmembrane segment at 90–110 (VIIVIYLSVVGALLLYMAFLM) threads the bilayer. Topologically, residues 111–183 (LVDPLIRKPD…TVFDRHKMLS (73 aa)) are cytoplasmic. Residues serine 137 and serine 144 each carry the phosphoserine modification.

Belongs to the TMEM9 family. Interacts with the v-ATPase accessory protein ATP6AP2 and with the v-ATPase complex subunit ATP6V0D1; these interactions lead to the assembly of the v-ATPase complex. In terms of processing, N-glycosylated. Highly expressed in adrenal gland, thyroid gland, testis, ovary and prostate. Moderate expression in trachea, spinal cord, stomach, colon, small intestine and spleen. Low expression in bone marrow, lymph node, thymus and peripheral blood lymphocytes. Expression is detected in hematopoietic cell lines including those of myeloid, erythroid, B- and T-cell origin.

The protein localises to the lysosome membrane. It is found in the late endosome membrane. The protein resides in the endosome. Its subcellular location is the multivesicular body membrane. In terms of biological role, transmembrane protein that binds to and facilitates the assembly of lysosomal proton-transporting V-type ATPase (v-ATPase), resulting in enhanced lysosomal acidification and trafficking. By bringing the v-ATPase accessory protein ATP6AP2 and the v-ATPase subunit ATP6V0D1 together, allows v-ATPase complex formation and activation. TMEM9-controlled vesicular acidification induces hyperactivation of Wnt/beta-catenin signaling, involved in development, tissue homeostasis and tissue regeneration, through lysosomal degradation of adenomatous polyposis coli/APC. In the liver, involved in hepatic regeneration. The polypeptide is Proton-transporting V-type ATPase complex assembly regulator TMEM9 (Homo sapiens (Human)).